The sequence spans 329 residues: Major outer membrane protein P.IB (329 aa).

The N-terminal stretch at 1-19 is a signal peptide; sequence MKKSLIALTLAALPVAAMA.

It belongs to the Gram-negative porin family. Homotrimer.

Its subcellular location is the cell outer membrane. Functionally, serves as a slightly cation selective porin. This is Major outer membrane protein P.IB (porB) from Neisseria meningitidis serogroup A / serotype 4A (strain DSM 15465 / Z2491).